The sequence spans 379 residues: AT-rich binding protein (379 aa).

The segment at 29–52 adopts a C2H2-type 1 zinc-finger fold; it reads IVCHTCQEELQTQDQFWKHIQDEH. The span at 114-124 shows a compositional bias: basic and acidic residues; it reads EQREVELHEAH. Disordered stretches follow at residues 114–148 and 221–267; these read EQRE…DAAK and PTAS…STTL. Low complexity-rich tracts occupy residues 125-143, 223-242, and 249-262; these read QQQQ…QQQQ and ASFV…TTPP. 2 consecutive C2H2-type zinc fingers follow at residues 312-336 and 342-365; these read YICD…RVVH and FNCD…KKKH.

The protein resides in the nucleus. Functionally, may be a transcription factor for genes having (A+T) stretches in their promoter and/or enhancer regions. Binds to AT rich DNA. This Drosophila willistoni (Fruit fly) protein is AT-rich binding protein.